We begin with the raw amino-acid sequence, 404 residues long: Tryptophan synthase beta chain (404 aa).

Lys-94 carries the N6-(pyridoxal phosphate)lysine modification.

This sequence belongs to the TrpB family. In terms of assembly, tetramer of two alpha and two beta chains. Pyridoxal 5'-phosphate is required as a cofactor.

The enzyme catalyses (1S,2R)-1-C-(indol-3-yl)glycerol 3-phosphate + L-serine = D-glyceraldehyde 3-phosphate + L-tryptophan + H2O. The protein operates within amino-acid biosynthesis; L-tryptophan biosynthesis; L-tryptophan from chorismate: step 5/5. In terms of biological role, the beta subunit is responsible for the synthesis of L-tryptophan from indole and L-serine. This chain is Tryptophan synthase beta chain, found in Staphylococcus aureus (strain bovine RF122 / ET3-1).